Reading from the N-terminus, the 55-residue chain is Ribulose bisphosphate carboxylase large chain (55 aa).

Residue His-18 is the Proton acceptor of the active site. Residues Arg-19 and His-27 each contribute to the substrate site.

The protein belongs to the RuBisCO large chain family. Type I subfamily. In terms of assembly, heterohexadecamer of 8 large chains and 8 small chains; disulfide-linked. The disulfide link is formed within the large subunit homodimers. Mg(2+) serves as cofactor. Post-translationally, the disulfide bond which can form in the large chain dimeric partners within the hexadecamer appears to be associated with oxidative stress and protein turnover.

The protein localises to the plastid. It localises to the chloroplast. The catalysed reaction is 2 (2R)-3-phosphoglycerate + 2 H(+) = D-ribulose 1,5-bisphosphate + CO2 + H2O. The enzyme catalyses D-ribulose 1,5-bisphosphate + O2 = 2-phosphoglycolate + (2R)-3-phosphoglycerate + 2 H(+). RuBisCO catalyzes two reactions: the carboxylation of D-ribulose 1,5-bisphosphate, the primary event in carbon dioxide fixation, as well as the oxidative fragmentation of the pentose substrate in the photorespiration process. Both reactions occur simultaneously and in competition at the same active site. This chain is Ribulose bisphosphate carboxylase large chain, found in Vitis sp. (Grape).